The chain runs to 151 residues: HTH-type transcriptional regulator FL11 (151 aa).

The region spanning 5–66 is the HTH asnC-type domain; the sequence is LDDIDKKIIE…VVNPEALGYN (62 aa). The segment at residues 24 to 43 is a DNA-binding region (H-T-H motif); sequence LREISKITGLAESTIHERIK. 98 to 104 is a binding site for L-arginine; sequence ETTGDYD. L-lysine is bound by residues asparagine 118, aspartate 122, and 133-135; that span reads THT. L-arginine-binding positions include aspartate 122 and 133–135; that span reads THT.

Homodimer. Binds DNA as a dimer and an octamer.

Its activity is regulated as follows. In the famine mode, FL11 forms dimers and acts as a repressor, leading to growth arrest. In the feast mode, in the presence of high concentrations of lysine or arginine, four dimers assemble into an octamer and cover the fl11 and lysine biosynthesis promoters. This leads to the inhibition of fl11 expression and lysine biosynthesis, decrease of the FL11 concentration in the cell, derepression of the target genes and activation of the metabolism. In terms of biological role, DNA-binding protein involved in the repression of transcription of a large number of genes, thereby arresting growth, in response to environmental changes. In Pyrococcus furiosus (strain ATCC 43587 / DSM 3638 / JCM 8422 / Vc1), this protein is HTH-type transcriptional regulator FL11.